The primary structure comprises 1317 residues: DNA-directed RNA polymerase subunit beta' (1317 aa).

Residues Cys-60, Cys-62, Cys-75, and Cys-78 each contribute to the Zn(2+) site. Residues 183–209 (ELEDEGAKSDVKRKVRDGGEREMRQLR) are disordered. Positions 535, 537, and 539 each coordinate Mg(2+). Residues Cys-890, Cys-967, Cys-974, and Cys-977 each coordinate Zn(2+).

It belongs to the RNA polymerase beta' chain family. In terms of assembly, the RNAP catalytic core consists of 2 alpha, 1 beta, 1 beta' and 1 omega subunit. When a sigma factor is associated with the core the holoenzyme is formed, which can initiate transcription. The cofactor is Mg(2+). Zn(2+) serves as cofactor.

It carries out the reaction RNA(n) + a ribonucleoside 5'-triphosphate = RNA(n+1) + diphosphate. In terms of biological role, DNA-dependent RNA polymerase catalyzes the transcription of DNA into RNA using the four ribonucleoside triphosphates as substrates. The chain is DNA-directed RNA polymerase subunit beta' from Mycolicibacterium vanbaalenii (strain DSM 7251 / JCM 13017 / BCRC 16820 / KCTC 9966 / NRRL B-24157 / PYR-1) (Mycobacterium vanbaalenii).